The chain runs to 166 residues: Phosphopantetheine adenylyltransferase (166 aa).

Position 11 (S11) interacts with substrate. ATP is bound by residues S11 to F12 and H19. Residues K43, A76, and R90 each contribute to the substrate site. ATP is bound by residues G91–R93, E101, and L126–S132.

The protein belongs to the bacterial CoaD family. In terms of assembly, homohexamer. Requires Mg(2+) as cofactor.

It localises to the cytoplasm. The enzyme catalyses (R)-4'-phosphopantetheine + ATP + H(+) = 3'-dephospho-CoA + diphosphate. It functions in the pathway cofactor biosynthesis; coenzyme A biosynthesis; CoA from (R)-pantothenate: step 4/5. Its function is as follows. Reversibly transfers an adenylyl group from ATP to 4'-phosphopantetheine, yielding dephospho-CoA (dPCoA) and pyrophosphate. In Streptococcus equi subsp. zooepidemicus (strain MGCS10565), this protein is Phosphopantetheine adenylyltransferase.